Here is a 378-residue protein sequence, read N- to C-terminus: 3-ketosteroid-9-alpha-monooxygenase, oxygenase component (378 aa).

In terms of domain architecture, Rieske spans 26–128; it reads WHCIGLAKDF…TMERNGVLFV (103 aa). Positions 67, 69, 86, and 89 each coordinate [2Fe-2S] cluster. The Fe cation site is built by Asn175, His181, His186, and Asp305.

As to quaternary structure, homotrimer. The two-component system 3-ketosteroid-9-alpha-monooxygenase is composed of an oxygenase component KshA and a reductase component KshB. [2Fe-2S] cluster serves as cofactor. Requires Fe cation as cofactor.

The enzyme catalyses androsta-1,4-diene-3,17-dione + 2 reduced [2Fe-2S]-[ferredoxin] + O2 + 2 H(+) = 9alpha-hydroxyandrosta-1,4-diene-3,17-dione + 2 oxidized [2Fe-2S]-[ferredoxin] + H2O. With respect to regulation, KSH activity is completely inhibited by zinc ions. KshA is specifically inhibited by Fe(3+), Co(2+), Zn(2+) and Ni(2+) ions. In vitro, catalyzes the introduction of a 9alpha-hydroxyl moiety into the ring B of 3-ketosteroid substrates such as 1,4-androstadiene-3,17-dione (ADD), 4-androstene-3,17-dione (AD), 4-androstene-17beta-ol-3-one (testosterone), 4-pregnene-3,20-dione (progesterone), 19-nor-4-androstene-3,17-dione (nordion), 1-(5alpha)-androstene-3,17-dione, 5alpha-androstane-3,17-dione and 5beta-androstane-3,17-dione. KSH has the highest activity with 3-keto-delta4 steroid substrates. In Rhodococcus rhodochrous, this protein is 3-ketosteroid-9-alpha-monooxygenase, oxygenase component.